A 276-amino-acid polypeptide reads, in one-letter code: Formamidopyrimidine-DNA glycosylase (276 aa).

Residue P2 is the Schiff-base intermediate with DNA of the active site. E3 functions as the Proton donor in the catalytic mechanism. K60 serves as the catalytic Proton donor; for beta-elimination activity. Positions 93 and 112 each coordinate DNA. Residues 240-274 (HVYGRKQQPCHHCDTAIEKTVVGGRGTHYCPNCQP) form an FPG-type zinc finger. R264 serves as the catalytic Proton donor; for delta-elimination activity.

It belongs to the FPG family. As to quaternary structure, monomer. Zn(2+) serves as cofactor.

The catalysed reaction is Hydrolysis of DNA containing ring-opened 7-methylguanine residues, releasing 2,6-diamino-4-hydroxy-5-(N-methyl)formamidopyrimidine.. It carries out the reaction 2'-deoxyribonucleotide-(2'-deoxyribose 5'-phosphate)-2'-deoxyribonucleotide-DNA = a 3'-end 2'-deoxyribonucleotide-(2,3-dehydro-2,3-deoxyribose 5'-phosphate)-DNA + a 5'-end 5'-phospho-2'-deoxyribonucleoside-DNA + H(+). Functionally, involved in base excision repair of DNA damaged by oxidation or by mutagenic agents. Acts as a DNA glycosylase that recognizes and removes damaged bases. Has a preference for oxidized purines, such as 7,8-dihydro-8-oxoguanine (8-oxoG). Has AP (apurinic/apyrimidinic) lyase activity and introduces nicks in the DNA strand. Cleaves the DNA backbone by beta-delta elimination to generate a single-strand break at the site of the removed base with both 3'- and 5'-phosphates. In Shouchella clausii (strain KSM-K16) (Alkalihalobacillus clausii), this protein is Formamidopyrimidine-DNA glycosylase.